The chain runs to 191 residues: Ribosome hibernation promotion factor (191 aa).

The segment at 100–123 (KQRQEGRPEPLPGPAEAEVNAQGS) is disordered.

Belongs to the HPF/YfiA ribosome-associated protein family. Long HPF subfamily. Interacts with 100S ribosomes.

The protein resides in the cytoplasm. In terms of biological role, required for dimerization of active 70S ribosomes into 100S ribosomes in stationary phase; 100S ribosomes are translationally inactive and sometimes present during exponential growth. This chain is Ribosome hibernation promotion factor, found in Deinococcus radiodurans (strain ATCC 13939 / DSM 20539 / JCM 16871 / CCUG 27074 / LMG 4051 / NBRC 15346 / NCIMB 9279 / VKM B-1422 / R1).